The sequence spans 73 residues: Antimicrobial peptide TsAP-1 (73 aa).

The first 22 residues, 1-22 (MQIKHLITLFFLVLIVADQCSA), serve as a signal peptide directing secretion. K39 carries the lysine amide modification. A propeptide spanning residues 45–73 (EISAQIEQYKDLQKREAELEELLDRLPMY) is cleaved from the precursor.

As to expression, expressed by the venom gland.

Its subcellular location is the secreted. In terms of biological role, has a low antimicrobial activity against S.aureus, E.coli, and C.albicans (MICs 120-160 uM). Has a low hemolytic activity (4% at 160 uM). Also inhibits the growth of two cancer cell lines on a total of five (the squamous carcinoma cell line H157 (IC(50)=55.9 uM) and the lung adenocarcinoma cell line H838 (IC(50)=52.5 uM)). The protein is Antimicrobial peptide TsAP-1 of Tityus serrulatus (Brazilian scorpion).